The sequence spans 226 residues: 2-C-methyl-D-erythritol 4-phosphate cytidylyltransferase (226 aa).

It belongs to the IspD/TarI cytidylyltransferase family. IspD subfamily.

It carries out the reaction 2-C-methyl-D-erythritol 4-phosphate + CTP + H(+) = 4-CDP-2-C-methyl-D-erythritol + diphosphate. The protein operates within isoprenoid biosynthesis; isopentenyl diphosphate biosynthesis via DXP pathway; isopentenyl diphosphate from 1-deoxy-D-xylulose 5-phosphate: step 2/6. Functionally, catalyzes the formation of 4-diphosphocytidyl-2-C-methyl-D-erythritol from CTP and 2-C-methyl-D-erythritol 4-phosphate (MEP). The polypeptide is 2-C-methyl-D-erythritol 4-phosphate cytidylyltransferase (Actinobacillus pleuropneumoniae serotype 7 (strain AP76)).